Reading from the N-terminus, the 315-residue chain is uncharacterized protein (315 aa).

This is an uncharacterized protein from Bos taurus (Bovine).